A 911-amino-acid chain; its full sequence is Leucine--tRNA ligase (911 aa).

Residues 42–52 (PYPSGKLHMGH) carry the 'HIGH' region motif. The 'KMSKS' region signature appears at 659–663 (TMSKS). Lys-662 provides a ligand contact to ATP.

It belongs to the class-I aminoacyl-tRNA synthetase family.

It is found in the cytoplasm. The catalysed reaction is tRNA(Leu) + L-leucine + ATP = L-leucyl-tRNA(Leu) + AMP + diphosphate. The polypeptide is Leucine--tRNA ligase (Delftia acidovorans (strain DSM 14801 / SPH-1)).